A 197-amino-acid polypeptide reads, in one-letter code: Zinc finger protein 581 (197 aa).

Over residues 1–10 (MLVLPSPCPQ) the composition is skewed to pro residues. Positions 1-52 (MLVLPSPCPQPLAFSSVETMEGPPRRTCRSPEPGPSSSIGSPQASSPPRPNH) are disordered. Low complexity predominate over residues 35–44 (PSSSIGSPQA). 4 consecutive C2H2-type zinc fingers follow at residues 87 to 109 (YSCP…SITH), 115 to 137 (FECD…HSIH), 145 to 167 (HGCP…SRVH), and 173 to 196 (FQCP…RWKH).

Its subcellular location is the nucleus. In terms of biological role, may be involved in transcriptional regulation. The protein is Zinc finger protein 581 (ZNF581) of Homo sapiens (Human).